The primary structure comprises 340 residues: Thioesterase pkgB (340 aa).

Histidine 97, histidine 99, aspartate 101, histidine 102, and histidine 205 together coordinate Zn(2+). The Proton donor/acceptor role is filled by aspartate 101. A compositionally biased stretch (low complexity) spans serine 242 to serine 258. Positions serine 242–serine 271 are disordered.

It belongs to the metallo-beta-lactamase superfamily. Requires Zn(2+) as cofactor.

It carries out the reaction 3,5,7,9,11,13-hexaoxotetradecanoyl-[ACP] = dehydrocitreoisocoumarin + holo-[ACP] + H2O. The catalysed reaction is 3,5,7,9,11-pentaoxododecanoyl-[ACP] = 6,8-dihydroxy-3-(2-oxopropyl)-isocoumarin + holo-[ACP] + H2O. Thioesterase; part of the pkg gene cluster that mediates the biosynthesis of dihydrocitreoisocoumarin and 6,8-dihydroxy-3-(2-oxopropyl)-isocoumarin. The non-reducing polyketide synthase pkgA performs the condensation of one acetyl-CoA starter unit with 6 and 5 malonyl-CoA units, respectively. As pkgA lacks a releasing domain, the thioesterase pkgB is necessary to break the thioester bond and release dihydrocitreoisocoumarin and 6,8-dihydroxy-3-(2-oxopropyl)-isocoumarin from pkgA. The sequence is that of Thioesterase pkgB from Emericella nidulans (strain FGSC A4 / ATCC 38163 / CBS 112.46 / NRRL 194 / M139) (Aspergillus nidulans).